A 420-amino-acid polypeptide reads, in one-letter code: D-tagatose-1,6-bisphosphate aldolase subunit GatZ (420 aa).

The protein belongs to the GatZ/KbaZ family. GatZ subfamily. As to quaternary structure, forms a complex with GatY.

It participates in carbohydrate metabolism; D-tagatose 6-phosphate degradation; D-glyceraldehyde 3-phosphate and glycerone phosphate from D-tagatose 6-phosphate: step 2/2. Its function is as follows. Component of the tagatose-1,6-bisphosphate aldolase GatYZ that is required for full activity and stability of the Y subunit. Could have a chaperone-like function for the proper and stable folding of GatY. When expressed alone, GatZ does not show any aldolase activity. Is involved in the catabolism of galactitol. The protein is D-tagatose-1,6-bisphosphate aldolase subunit GatZ of Escherichia coli (strain SE11).